We begin with the raw amino-acid sequence, 236 residues long: 2,3,4,5-tetrahydropyridine-2,6-dicarboxylate N-acetyltransferase (236 aa).

It belongs to the transferase hexapeptide repeat family. DapH subfamily.

The enzyme catalyses (S)-2,3,4,5-tetrahydrodipicolinate + acetyl-CoA + H2O = L-2-acetamido-6-oxoheptanedioate + CoA. The protein operates within amino-acid biosynthesis; L-lysine biosynthesis via DAP pathway; LL-2,6-diaminopimelate from (S)-tetrahydrodipicolinate (acetylase route): step 1/3. Catalyzes the transfer of an acetyl group from acetyl-CoA to tetrahydrodipicolinate. This chain is 2,3,4,5-tetrahydropyridine-2,6-dicarboxylate N-acetyltransferase, found in Oceanobacillus iheyensis (strain DSM 14371 / CIP 107618 / JCM 11309 / KCTC 3954 / HTE831).